The sequence spans 468 residues: MFDESKFDVNLKLWALRIPRELCKSASRILNGYMLNMPRIKPITEDPTCEKTRLVILSESVKNADLSEIPEEKLNQLKKLSELEVVPHSVTLGYSYWSADHLLKQILPDGLDIPSSFETIGHIAHLNLHDELLPFKDVIAKVIYDKNYPRIKTIVNKVGTISNEFRVPKFEVLAGENGMETEVKQYGARFKLDYGLVYWNSRLEHEHMRLSSLFKPGETVCDMFAGIGPFAIPAAQKGCFVYANDLNPDSVRYLKINAKFNKVDDLICVHNMDARKFFSHLMAVSTCEDNLQSVADNDKTKEAAVSRGGETNSSGEEIRESNASINEPLGANKKPSGTTKTENGVGKDCKSIEGHANKRLRQTLLPIAKPWEHIDHVIMNLPASALQFLDSFSNVIQKKYWKGPLPLIHCYCFIRASETTEFIIAEAETALKFHIEDPVFHKVRDVAPNKAMFCLSFRLPEACLKQEE.

Residues His207, 245-246 (DL), and 273-274 (DA) contribute to the S-adenosyl-L-methionine site. The tract at residues 301 to 348 (KEAAVSRGGETNSSGEEIRESNASINEPLGANKKPSGTTKTENGVGKD) is disordered. The segment covering 309 to 325 (GETNSSGEEIRESNASI) has biased composition (polar residues). Asn380 serves as a coordination point for S-adenosyl-L-methionine.

Belongs to the class I-like SAM-binding methyltransferase superfamily. TRM5/TYW2 family. As to quaternary structure, monomer.

It localises to the mitochondrion matrix. Its subcellular location is the nucleus. It is found in the cytoplasm. It carries out the reaction guanosine(37) in tRNA + S-adenosyl-L-methionine = N(1)-methylguanosine(37) in tRNA + S-adenosyl-L-homocysteine + H(+). Specifically methylates the N1 position of guanosine-37 in various cytoplasmic and mitochondrial tRNAs. Methylation is not dependent on the nature of the nucleoside 5' of the target nucleoside. This is the first step in the biosynthesis of wybutosine (yW), a modified base adjacent to the anticodon of tRNAs and required for accurate decoding. The sequence is that of tRNA (guanine(37)-N(1))-methyltransferase 1 from Arabidopsis thaliana (Mouse-ear cress).